A 473-amino-acid chain; its full sequence is Reticulon-4 receptor (473 aa).

The N-terminal stretch at 1 to 26 is a signal peptide; that stretch reads MKRASSGGSRLLAWVLWLQAWRVATP. Cystine bridges form between Cys-27–Cys-33 and Cys-31–Cys-43. Residues 27 to 57 form the LRRNT domain; the sequence is CPGACVCYNEPKVTTSCPQQGLQAVPTGIPA. LRR repeat units follow at residues 56–79, 80–103, 105–128, 129–152, 153–176, 178–200, 202–224, 225–248, and 250–273; these read PASS…SFQS, CRNL…AFTG, TLLE…TFRG, LGHL…LFRG, LAAL…TFRD, GNLT…AFRG, HSLD…AFRD, LGRL…VLVP, and RSLQ…PLWA. Residue Asn-82 is glycosylated (N-linked (GlcNAc...) asparagine). Positions 260-310 constitute an LRRCT domain; sequence NPWVCDCRARPLWAWLQKFRGSSSEVPCNLPQRLAGRDLKRLAASDLEGCA. 3 disulfides stabilise this stretch: Cys-264–Cys-287, Cys-266–Cys-335, and Cys-309–Cys-336. The disordered stretch occupies residues 346–446; it reads VLEPGRPASA…GSSGTGDAEG (101 aa). The N-linked (GlcNAc...) asparagine glycan is linked to Asn-372. The segment covering 413–429 has biased composition (basic residues); that stretch reads PRRRPGCSRKNRTRSHC. Over residues 434 to 445 the composition is skewed to gly residues; the sequence is AGSGSSGTGDAE. Residue Ser-447 is the site of GPI-anchor amidated serine attachment. Positions 448-473 are cleaved as a propeptide — removed in mature form; that stretch reads GALPALACSLAPLGLALVLWTVLGPC.

Belongs to the Nogo receptor family. Homodimer. Interacts with MAG. Interacts with RTN4 and OMG. Interacts with LINGO1 and NGFR. Interacts with KIAA0319L. Interacts with OLFM1; this inhibits interaction with LINGO1 and NGFR. Post-translationally, N-glycosylated. O-glycosylated. Contains terminal sialic acid groups on its glycan chains. Detected in embryonic cerebellum, in spinal cord motor neurons and in dorsal root ganglia. Detected in adult brain, in neocortex, hippocampus, striatum, thalamus and dorsal root ganglion neurons (at protein level).

The protein resides in the cell membrane. Its subcellular location is the membrane raft. The protein localises to the cell projection. It is found in the dendrite. It localises to the perikaryon. The protein resides in the axon. In terms of biological role, receptor for RTN4, OMG and MAG. Functions as a receptor for the sialylated gangliosides GT1b and GM1. Besides, functions as a receptor for chondroitin sulfate proteoglycans. Can also bind heparin. Intracellular signaling cascades are triggered via the coreceptor NGFR. Signaling mediates activation of Rho and downstream reorganization of the actin cytoskeleton. Mediates axonal growth inhibition. May play a role in regulating axon regeneration and neuronal plasticity in the adult central nervous system. Plays a role in postnatal brain development. Required for normal axon migration across the brain midline and normal formation of the corpus callosum. Protects motoneurons against apoptosis; protection against apoptosis is probably mediated via interaction with MAG. Acts in conjunction with RTN4 and LINGO1 in regulating neuronal precursor cell motility during cortical development. Like other family members, plays a role in restricting the number dendritic spines and the number of synapses that are formed during brain development. This chain is Reticulon-4 receptor (Rtn4r), found in Rattus norvegicus (Rat).